The following is a 735-amino-acid chain: Probable E3 ubiquitin-protein ligase MID2 (735 aa).

An RING-type zinc finger spans residues 30–80 (CPICLELFEDPLLLPCAHSLCFSCAHRILVSSCSSGESIEPITAFQCPTCR). The B box-type 1; degenerate zinc-finger motif lies at 137–184 (IACQFCEQDPPRDAVKTCITCEVSYCDRCLRATHPNKKPFTSHRLVEP). The B box-type 2 zinc finger occupies 190–232 (LRGITCLDHENEKVNMYCVSDDQLICALCKLVGRHRDHQVASL). Residues Cys195, His198, Cys218, and His224 each contribute to the Zn(2+) site. Positions 233–301 (NDRFEKLKQT…IIQQRKQMIA (69 aa)) form a coiled coil. The COS domain occupies 340 to 399 (LKENDQARFLQSAKNIAERVAMATASSQVLIPDINFNDAFENFALDFSREKKLLEGLDYL). The Fibronectin type-III domain maps to 398-531 (YLTAPNPPSI…RNSEPTRLKT (134 aa)). One can recognise a B30.2/SPRY domain in the interval 516 to 709 (INQAGSRNSE…ILSGLPAPDF (194 aa)).

The protein belongs to the TRIM/RBCC family. In terms of assembly, homodimer or heterodimer with MID1. Interacts with IGBP1. In terms of processing, phosphorylated on serine and threonine residues. In terms of tissue distribution, low level in fetal kidney and lung, and in adult prostate, ovary and small intestine.

The protein resides in the cytoplasm. The protein localises to the cytoskeleton. The enzyme catalyses S-ubiquitinyl-[E2 ubiquitin-conjugating enzyme]-L-cysteine + [acceptor protein]-L-lysine = [E2 ubiquitin-conjugating enzyme]-L-cysteine + N(6)-ubiquitinyl-[acceptor protein]-L-lysine.. It participates in protein modification; protein ubiquitination. In terms of biological role, E3 ubiquitin ligase that plays a role in microtubule stabilization. Mediates the 'Lys-48'-linked polyubiquitination of LRRK2 to drive its localization to microtubules and its proteasomal degradation in neurons. This ubiquitination inhibits LRRK2 kinase activation by RAB29. This chain is Probable E3 ubiquitin-protein ligase MID2 (MID2), found in Homo sapiens (Human).